An 872-amino-acid polypeptide reads, in one-letter code: Alanine--tRNA ligase (872 aa).

Residues His567, His571, Cys669, and His673 each contribute to the Zn(2+) site.

The protein belongs to the class-II aminoacyl-tRNA synthetase family. Requires Zn(2+) as cofactor.

The protein localises to the cytoplasm. The enzyme catalyses tRNA(Ala) + L-alanine + ATP = L-alanyl-tRNA(Ala) + AMP + diphosphate. In terms of biological role, catalyzes the attachment of alanine to tRNA(Ala) in a two-step reaction: alanine is first activated by ATP to form Ala-AMP and then transferred to the acceptor end of tRNA(Ala). Also edits incorrectly charged Ser-tRNA(Ala) and Gly-tRNA(Ala) via its editing domain. The polypeptide is Alanine--tRNA ligase (Streptococcus pyogenes serotype M2 (strain MGAS10270)).